A 148-amino-acid polypeptide reads, in one-letter code: Deoxyuridine 5'-triphosphate nucleotidohydrolase (148 aa).

Residues 67 to 69 (RSG), asparagine 80, 84 to 86 (LID), and methionine 94 each bind substrate.

It belongs to the dUTPase family. The cofactor is Mg(2+).

The enzyme catalyses dUTP + H2O = dUMP + diphosphate + H(+). It functions in the pathway pyrimidine metabolism; dUMP biosynthesis; dUMP from dCTP (dUTP route): step 2/2. This enzyme is involved in nucleotide metabolism: it produces dUMP, the immediate precursor of thymidine nucleotides and it decreases the intracellular concentration of dUTP so that uracil cannot be incorporated into DNA. This chain is Deoxyuridine 5'-triphosphate nucleotidohydrolase, found in Francisella tularensis subsp. holarctica (strain FTNF002-00 / FTA).